Consider the following 244-residue polypeptide: UPF0173 metal-dependent hydrolase RoseRS_3945 (244 aa).

Belongs to the UPF0173 family.

The polypeptide is UPF0173 metal-dependent hydrolase RoseRS_3945 (Roseiflexus sp. (strain RS-1)).